Consider the following 271-residue polypeptide: MTRLAETFARTRAEGRAALVTFVTGGDPTPGDMGPILDALVAGGADVIELGMPFTDPMADGPAIQRANLRALGAGTTTADLLAIAAAFRQRHPSVPLVLMGYANPMVRRGPEWFAAEAAKAGVDGVICVDIPPEQDGALGPALRAAGVAPIRLATPTTDAARLPAVLEGASGFLYYVSVAGITGMQQAGQASIEAAVARFKAATDLPVAVGFGVRGPEQAEAIGRVADGVVVGSAIVDLIGEHGAAAAGPVRDFTATLSAALRRAAQEKAA.

Active-site proton acceptor residues include Glu49 and Asp60.

This sequence belongs to the TrpA family. In terms of assembly, tetramer of two alpha and two beta chains.

The enzyme catalyses (1S,2R)-1-C-(indol-3-yl)glycerol 3-phosphate + L-serine = D-glyceraldehyde 3-phosphate + L-tryptophan + H2O. Its pathway is amino-acid biosynthesis; L-tryptophan biosynthesis; L-tryptophan from chorismate: step 5/5. In terms of biological role, the alpha subunit is responsible for the aldol cleavage of indoleglycerol phosphate to indole and glyceraldehyde 3-phosphate. This Rhizorhabdus wittichii (strain DSM 6014 / CCUG 31198 / JCM 15750 / NBRC 105917 / EY 4224 / RW1) (Sphingomonas wittichii) protein is Tryptophan synthase alpha chain.